The following is a 442-amino-acid chain: Coiled-coil domain-containing protein 91 (442 aa).

Residues M1–D16 are GGA1-binding motif. Residues M1–P27 are disordered. A phosphoserine mark is found at S43 and S46. Disordered regions lie at residues E48–S80 and H114–Q134. 3 coiled-coil regions span residues V130–A210, H253–V318, and A346–D408. Residues L211 to R414 form a homodimerization region.

In terms of assembly, homodimer. Interacts with GGA1, GGA2 and AP1G1.

The protein localises to the membrane. It is found in the golgi apparatus. The protein resides in the trans-Golgi network membrane. Its subcellular location is the trans-Golgi network. Functionally, involved in the regulation of membrane traffic through the trans-Golgi network (TGN). Functions in close cooperation with the GGAs in the sorting of hydrolases to lysosomes. The polypeptide is Coiled-coil domain-containing protein 91 (Ccdc91) (Mus musculus (Mouse)).